Here is a 451-residue protein sequence, read N- to C-terminus: Type 3 secretion system ATPase (451 aa).

Residue 184-189 (GGGKST) participates in ATP binding.

It belongs to the ATPase alpha/beta chains family. T3SS ATPase subfamily. As to quaternary structure, the core secretion machinery of the T3SS is composed of approximately 20 different proteins, including cytoplasmic components, a base, an export apparatus and a needle. This subunit is part of the cytosolic complex. Forms homohexamers.

The protein localises to the cytoplasm. The enzyme catalyses ATP + H2O + cellular proteinSide 1 = ADP + phosphate + cellular proteinSide 2.. Functionally, ATPase component of the type III secretion system (T3SS), also called injectisome, which is used to inject bacterial effector proteins into eukaryotic host cells. Acts as a molecular motor to provide the energy that is required for the export of proteins. Required for type III secretion apparatus (T3SA) formation, proper protein secretion, host cell invasion and virulence. May play a critical role in T3SS substrate recognition, disassembly of the effector/chaperone complex and unfolding of the effector in an ATP-dependent manner prior to secretion. The polypeptide is Type 3 secretion system ATPase (Sinorhizobium fredii (strain NBRC 101917 / NGR234)).